The following is a 510-amino-acid chain: Histidine ammonia-lyase (510 aa).

The segment at residues 143 to 145 (ASG) is a cross-link (5-imidazolinone (Ala-Gly)). Ser-144 carries the post-translational modification 2,3-didehydroalanine (Ser).

The protein belongs to the PAL/histidase family. In terms of processing, contains an active site 4-methylidene-imidazol-5-one (MIO), which is formed autocatalytically by cyclization and dehydration of residues Ala-Ser-Gly.

Its subcellular location is the cytoplasm. It catalyses the reaction L-histidine = trans-urocanate + NH4(+). It functions in the pathway amino-acid degradation; L-histidine degradation into L-glutamate; N-formimidoyl-L-glutamate from L-histidine: step 1/3. This chain is Histidine ammonia-lyase, found in Aliivibrio fischeri (strain MJ11) (Vibrio fischeri).